The sequence spans 145 residues: UPF0179 protein Msm_0285 (145 aa).

This sequence belongs to the UPF0179 family.

In Methanobrevibacter smithii (strain ATCC 35061 / DSM 861 / OCM 144 / PS), this protein is UPF0179 protein Msm_0285.